We begin with the raw amino-acid sequence, 388 residues long: Succinate--CoA ligase [ADP-forming] subunit beta (388 aa).

An ATP-grasp domain is found at 9 to 244 (KALFAEYGLP…PSQDDAREAH (236 aa)). ATP-binding positions include lysine 46, 53–55 (GRG), glutamate 99, threonine 102, and glutamate 107. The Mg(2+) site is built by asparagine 199 and aspartate 213. Residues asparagine 264 and 321-323 (GIV) contribute to the substrate site.

The protein belongs to the succinate/malate CoA ligase beta subunit family. Heterotetramer of two alpha and two beta subunits. It depends on Mg(2+) as a cofactor.

The enzyme catalyses succinate + ATP + CoA = succinyl-CoA + ADP + phosphate. The catalysed reaction is GTP + succinate + CoA = succinyl-CoA + GDP + phosphate. The protein operates within carbohydrate metabolism; tricarboxylic acid cycle; succinate from succinyl-CoA (ligase route): step 1/1. Functionally, succinyl-CoA synthetase functions in the citric acid cycle (TCA), coupling the hydrolysis of succinyl-CoA to the synthesis of either ATP or GTP and thus represents the only step of substrate-level phosphorylation in the TCA. The beta subunit provides nucleotide specificity of the enzyme and binds the substrate succinate, while the binding sites for coenzyme A and phosphate are found in the alpha subunit. This Shewanella pealeana (strain ATCC 700345 / ANG-SQ1) protein is Succinate--CoA ligase [ADP-forming] subunit beta.